A 182-amino-acid polypeptide reads, in one-letter code: MSYVVAITGGIGSGKTTVADRFQALYNINIVDADIIAREVVNPGTEGLIQIEQHFGPQILLDDGHLNRAKLRECIFSEPSEKQWLNDLLHPLIRSEMQRQIALSTSEYTLLVVPLLVENKLQYLANRVLVVDVLEQTQINRTVNRDKVNHQQVKAILASQASREERLAAADDIINNDHKIMT.

The region spanning 4 to 182 (VVAITGGIGS…IINNDHKIMT (179 aa)) is the DPCK domain. 12–17 (GSGKTT) contributes to the ATP binding site.

It belongs to the CoaE family.

The protein localises to the cytoplasm. It catalyses the reaction 3'-dephospho-CoA + ATP = ADP + CoA + H(+). It functions in the pathway cofactor biosynthesis; coenzyme A biosynthesis; CoA from (R)-pantothenate: step 5/5. Catalyzes the phosphorylation of the 3'-hydroxyl group of dephosphocoenzyme A to form coenzyme A. The polypeptide is Dephospho-CoA kinase (Aliivibrio fischeri (strain ATCC 700601 / ES114) (Vibrio fischeri)).